Reading from the N-terminus, the 189-residue chain is Glycerol-3-phosphate acyltransferase (189 aa).

5 helical membrane passes run 1 to 21, 50 to 70, 77 to 97, 111 to 131, and 151 to 171; these read MFWL…AIVL, KLAI…VLLA, LHAQ…PLYF, MLMA…LLTF, and LLAW…VMIV.

Belongs to the PlsY family. In terms of assembly, probably interacts with PlsX.

The protein localises to the cell inner membrane. The catalysed reaction is an acyl phosphate + sn-glycerol 3-phosphate = a 1-acyl-sn-glycero-3-phosphate + phosphate. The protein operates within lipid metabolism; phospholipid metabolism. Catalyzes the transfer of an acyl group from acyl-phosphate (acyl-PO(4)) to glycerol-3-phosphate (G3P) to form lysophosphatidic acid (LPA). This enzyme utilizes acyl-phosphate as fatty acyl donor, but not acyl-CoA or acyl-ACP. This Pseudomonas putida (strain ATCC 47054 / DSM 6125 / CFBP 8728 / NCIMB 11950 / KT2440) protein is Glycerol-3-phosphate acyltransferase.